A 404-amino-acid polypeptide reads, in one-letter code: Cysteine desulfurase IscS (404 aa).

Pyridoxal 5'-phosphate-binding positions include 75 to 76, Asn155, Gln183, and 203 to 205; these read AT and SAH. At Lys206 the chain carries N6-(pyridoxal phosphate)lysine. Thr243 serves as a coordination point for pyridoxal 5'-phosphate. Cys328 serves as the catalytic Cysteine persulfide intermediate. Cys328 is a binding site for [2Fe-2S] cluster.

This sequence belongs to the class-V pyridoxal-phosphate-dependent aminotransferase family. NifS/IscS subfamily. As to quaternary structure, homodimer. Forms a heterotetramer with IscU, interacts with other sulfur acceptors. Pyridoxal 5'-phosphate is required as a cofactor.

It localises to the cytoplasm. The enzyme catalyses (sulfur carrier)-H + L-cysteine = (sulfur carrier)-SH + L-alanine. It functions in the pathway cofactor biosynthesis; iron-sulfur cluster biosynthesis. Master enzyme that delivers sulfur to a number of partners involved in Fe-S cluster assembly, tRNA modification or cofactor biosynthesis. Catalyzes the removal of elemental sulfur atoms from cysteine to produce alanine. Functions as a sulfur delivery protein for Fe-S cluster synthesis onto IscU, an Fe-S scaffold assembly protein, as well as other S acceptor proteins. In Vibrio cholerae serotype O1 (strain M66-2), this protein is Cysteine desulfurase IscS.